A 308-amino-acid polypeptide reads, in one-letter code: Transcription initiation factor IIB (308 aa).

2 repeat units span residues 124 to 207 (NELE…LREL) and 218 to 299 (DYVT…ELTQ).

Belongs to the TFIIB family.

Its function is as follows. Stabilizes TBP binding to an archaeal box-A promoter. Also responsible for recruiting RNA polymerase II to the pre-initiation complex (DNA-TBP-TFIIB). The chain is Transcription initiation factor IIB from Sulfurisphaera tokodaii (strain DSM 16993 / JCM 10545 / NBRC 100140 / 7) (Sulfolobus tokodaii).